The primary structure comprises 150 residues: Transcription antitermination protein NusB (150 aa).

This sequence belongs to the NusB family.

Its function is as follows. Involved in transcription antitermination. Required for transcription of ribosomal RNA (rRNA) genes. Binds specifically to the boxA antiterminator sequence of the ribosomal RNA (rrn) operons. The protein is Transcription antitermination protein NusB of Streptococcus pyogenes serotype M4 (strain MGAS10750).